Reading from the N-terminus, the 216-residue chain is Large ribosomal subunit protein uL1 (216 aa).

The protein belongs to the universal ribosomal protein uL1 family.

The polypeptide is Large ribosomal subunit protein uL1 (Caenorhabditis elegans).